We begin with the raw amino-acid sequence, 500 residues long: Cobyric acid synthase (500 aa).

Residues 251–449 (KLNIVIPIMP…LHGVFDHPDA (199 aa)) form the GATase cobBQ-type domain. The active-site Nucleophile is cysteine 332. Histidine 441 is an active-site residue.

It belongs to the CobB/CobQ family. CobQ subfamily.

It functions in the pathway cofactor biosynthesis; adenosylcobalamin biosynthesis. Catalyzes amidations at positions B, D, E, and G on adenosylcobyrinic A,C-diamide. NH(2) groups are provided by glutamine, and one molecule of ATP is hydrogenolyzed for each amidation. The protein is Cobyric acid synthase of Marinomonas sp. (strain MWYL1).